The following is a 326-amino-acid chain: Phenylalanine--tRNA ligase alpha subunit (326 aa).

Residue glutamate 251 coordinates Mg(2+).

Belongs to the class-II aminoacyl-tRNA synthetase family. Phe-tRNA synthetase alpha subunit type 1 subfamily. Tetramer of two alpha and two beta subunits. Requires Mg(2+) as cofactor.

It localises to the cytoplasm. It carries out the reaction tRNA(Phe) + L-phenylalanine + ATP = L-phenylalanyl-tRNA(Phe) + AMP + diphosphate + H(+). The sequence is that of Phenylalanine--tRNA ligase alpha subunit from Idiomarina loihiensis (strain ATCC BAA-735 / DSM 15497 / L2-TR).